The sequence spans 478 residues: Oxidative stress-induced growth inhibitor 1 (478 aa).

Ser-12 carries the phosphoserine modification.

It belongs to the OKL38 family. It depends on NADPH as a cofactor.

It localises to the midbody. In terms of biological role, monooxygenase catalytic activity. Involved in regulation of cytokinesis; promotes RHOA activity, probably acting locally at the midbody in late cytokinesis. Monooxygenase activity is involved in stabilizing transient structures between daughter cells, termed intercellular bridges, before abscission. Regulates differentiation and proliferation through the regulation of cell death. The sequence is that of Oxidative stress-induced growth inhibitor 1 from Mus musculus (Mouse).